The primary structure comprises 261 residues: 5-oxoprolinase subunit A (261 aa).

This sequence belongs to the LamB/PxpA family. In terms of assembly, forms a complex composed of PxpA, PxpB and PxpC.

It catalyses the reaction 5-oxo-L-proline + ATP + 2 H2O = L-glutamate + ADP + phosphate + H(+). Its function is as follows. Catalyzes the cleavage of 5-oxoproline to form L-glutamate coupled to the hydrolysis of ATP to ADP and inorganic phosphate. In Coprothermobacter proteolyticus (strain ATCC 35245 / DSM 5265 / OCM 4 / BT), this protein is 5-oxoprolinase subunit A.